A 1065-amino-acid chain; its full sequence is Bifunctional cytochrome P450/NADPH--P450 reductase (1065 aa).

The tract at residues M1–K479 is cytochrome P450. Residue C405 coordinates heme. The NADPH--P450 reductase stretch occupies residues Q480–I1065. Residues L496–W635 form the Flavodoxin-like domain. FMN-binding positions include S502–A507, S549–G552, C583–D585, and T591–Q593. Residues Y674–P907 enclose the FAD-binding FR-type domain.

In the N-terminal section; belongs to the cytochrome P450 family. Heme serves as cofactor. The cofactor is FAD. It depends on FMN as a cofactor.

It catalyses the reaction 2 oxidized [cytochrome P450] + NADPH = 2 reduced [cytochrome P450] + NADP(+) + H(+). The enzyme catalyses an organic molecule + reduced [NADPH--hemoprotein reductase] + O2 = an alcohol + oxidized [NADPH--hemoprotein reductase] + H2O + H(+). In terms of biological role, functions as a fatty acid monooxygenase. Catalyzes hydroxylation of fatty acids at omega-1, omega-2 and omega-3 positions, yielding primarily omega-1 and omega-2 hydroxylated products. Metabolizes unsaturated and saturated fatty acids as well as N-acylamino acids. Has a preference for long-chain unsaturated fatty acids over saturated fatty acids. Shows activity toward saturated fatty acids with a chain length of 9-18 carbons with preference for longer fatty acids. Also displays a NADPH-dependent reductase activity in the C-terminal domain, which allows electron transfer from NADPH to the heme iron of the cytochrome P450 N-terminal domain. The chain is Bifunctional cytochrome P450/NADPH--P450 reductase from Bacillus cereus (strain ATCC 14579 / DSM 31 / CCUG 7414 / JCM 2152 / NBRC 15305 / NCIMB 9373 / NCTC 2599 / NRRL B-3711).